The following is a 198-amino-acid chain: Elongation factor Ts (198 aa).

The interval 81–84 is involved in Mg(2+) ion dislocation from EF-Tu; it reads TDFV.

Belongs to the EF-Ts family.

It is found in the cytoplasm. Associates with the EF-Tu.GDP complex and induces the exchange of GDP to GTP. It remains bound to the aminoacyl-tRNA.EF-Tu.GTP complex up to the GTP hydrolysis stage on the ribosome. The protein is Elongation factor Ts of Herpetosiphon aurantiacus (strain ATCC 23779 / DSM 785 / 114-95).